Consider the following 235-residue polypeptide: High mobility group protein 1.2 (235 aa).

The segment covering 1 to 34 (MNSGYSANIFPSSSSPTLYQSHQLQPNPSATMYQ) has biased composition (polar residues). The disordered stretch occupies residues 1 to 47 (MNSGYSANIFPSSSSPTLYQSHQLQPNPSATMYQATPRDMGKPPVRG). 2 consecutive DNA-binding regions (HMG box) follow at residues 47-117 (GKTS…AAYG) and 135-203 (PKRA…RNYK).

Belongs to the HMGB family.

It localises to the nucleus. The polypeptide is High mobility group protein 1.2 (hmg-1.2) (Caenorhabditis elegans).